A 203-amino-acid polypeptide reads, in one-letter code: Cell division protein SepF (203 aa).

2 disordered regions span residues D26–Q51 and G167–Q203. Composition is skewed to basic and acidic residues over residues E39–G50 and R183–Q203.

This sequence belongs to the SepF family. As to quaternary structure, homodimer. Interacts with FtsZ.

It is found in the cytoplasm. In terms of biological role, cell division protein that is part of the divisome complex and is recruited early to the Z-ring. Probably stimulates Z-ring formation, perhaps through the cross-linking of FtsZ protofilaments. Its function overlaps with FtsA. The polypeptide is Cell division protein SepF (Symbiobacterium thermophilum (strain DSM 24528 / JCM 14929 / IAM 14863 / T)).